The chain runs to 205 residues: Large ribosomal subunit protein uL13 (205 aa).

Belongs to the universal ribosomal protein uL13 family.

In Lupinus luteus (European yellow lupine), this protein is Large ribosomal subunit protein uL13 (RPL13A).